Here is a 128-residue protein sequence, read N- to C-terminus: Sulfurtransferase TusD (128 aa).

Residue Cys78 is the Cysteine persulfide intermediate of the active site.

The protein belongs to the DsrE/TusD family. Heterohexamer, formed by a dimer of trimers. The hexameric TusBCD complex contains 2 copies each of TusB, TusC and TusD. The TusBCD complex interacts with TusE.

Its subcellular location is the cytoplasm. Functionally, part of a sulfur-relay system required for 2-thiolation of 5-methylaminomethyl-2-thiouridine (mnm(5)s(2)U) at tRNA wobble positions. Accepts sulfur from TusA and transfers it in turn to TusE. The polypeptide is Sulfurtransferase TusD (Buchnera aphidicola subsp. Acyrthosiphon pisum (strain 5A)).